The sequence spans 459 residues: tRNA modification GTPase MnmE (459 aa).

Residues Arg-22, Glu-85, and Arg-124 each coordinate (6S)-5-formyl-5,6,7,8-tetrahydrofolate. The 160-residue stretch at 221–380 folds into the TrmE-type G domain; that stretch reads GLSTVIVGKP…LELQIRDLFF (160 aa). Asn-231 is a binding site for K(+). GTP contacts are provided by residues 231–236, 250–256, and 275–278; these read NVGKSS, TEVAGTT, and DTAG. Ser-235 contacts Mg(2+). K(+) contacts are provided by Thr-250, Val-252, and Thr-255. Position 256 (Thr-256) interacts with Mg(2+). Lys-459 contacts (6S)-5-formyl-5,6,7,8-tetrahydrofolate.

This sequence belongs to the TRAFAC class TrmE-Era-EngA-EngB-Septin-like GTPase superfamily. TrmE GTPase family. In terms of assembly, homodimer. Heterotetramer of two MnmE and two MnmG subunits. It depends on K(+) as a cofactor.

The protein localises to the cytoplasm. In terms of biological role, exhibits a very high intrinsic GTPase hydrolysis rate. Involved in the addition of a carboxymethylaminomethyl (cmnm) group at the wobble position (U34) of certain tRNAs, forming tRNA-cmnm(5)s(2)U34. The sequence is that of tRNA modification GTPase MnmE from Staphylococcus haemolyticus (strain JCSC1435).